Consider the following 418-residue polypeptide: tRNA(Met) cytidine acetate ligase (418 aa).

Positions 95, 161, and 186 each coordinate ATP.

It belongs to the TmcAL family.

The protein localises to the cytoplasm. It carries out the reaction cytidine(34) in elongator tRNA(Met) + acetate + ATP = N(4)-acetylcytidine(34) in elongator tRNA(Met) + AMP + diphosphate. In terms of biological role, catalyzes the formation of N(4)-acetylcytidine (ac(4)C) at the wobble position of elongator tRNA(Met), using acetate and ATP as substrates. First activates an acetate ion to form acetyladenylate (Ac-AMP) and then transfers the acetyl group to tRNA to form ac(4)C34. This chain is tRNA(Met) cytidine acetate ligase, found in Thermotoga maritima (strain ATCC 43589 / DSM 3109 / JCM 10099 / NBRC 100826 / MSB8).